The sequence spans 247 residues: 2,3-bisphosphoglycerate-dependent phosphoglycerate mutase (247 aa).

Substrate is bound by residues 8–15 (RHGESQWN), 21–22 (TG), Arg60, 87–90 (ERHY), Lys98, 114–115 (RR), and 183–184 (GN). Catalysis depends on His9, which acts as the Tele-phosphohistidine intermediate. The active-site Proton donor/acceptor is the Glu87.

This sequence belongs to the phosphoglycerate mutase family. BPG-dependent PGAM subfamily.

It catalyses the reaction (2R)-2-phosphoglycerate = (2R)-3-phosphoglycerate. It participates in carbohydrate degradation; glycolysis; pyruvate from D-glyceraldehyde 3-phosphate: step 3/5. Catalyzes the interconversion of 2-phosphoglycerate and 3-phosphoglycerate. The polypeptide is 2,3-bisphosphoglycerate-dependent phosphoglycerate mutase (Chlorobium phaeobacteroides (strain DSM 266 / SMG 266 / 2430)).